A 260-amino-acid chain; its full sequence is MVLIKVLANHLILQLSYAQKSSELVIGGDECNINEHRFLVALYHSRSRTFLCGGTLINQEWVLTAAHCDRFLMYIRLGMHNKNVKFDDEQRRFPKEKYFFACSNNFTKWDKDIMLIRLNRPVNNSEHIAPLSLPSNPPSVGSVCRVMGWGTITSPNETLPDVPHCANINLLHYSVCQAAYPKLPVTRRLLCAGILEGGIDSCHRDSGGPLICNGQFQGIVSWGRYPCAQPRVPGIYIKVFDYTDWIQSIIAGNTAVNCPP.

The signal sequence occupies residues 1–18; that stretch reads MVLIKVLANHLILQLSYA. A propeptide spanning residues 19-24 is cleaved from the precursor; the sequence is QKSSEL. A Peptidase S1 domain is found at 25 to 251; the sequence is VIGGDECNIN…YTDWIQSIIA (227 aa). Intrachain disulfides connect cysteine 31-cysteine 165, cysteine 52-cysteine 68, cysteine 102-cysteine 258, cysteine 144-cysteine 212, cysteine 176-cysteine 191, and cysteine 202-cysteine 227. Residue histidine 67 is the Charge relay system of the active site. N-linked (GlcNAc...) asparagine glycosylation occurs at asparagine 105. Aspartate 112 (charge relay system) is an active-site residue. N-linked (GlcNAc...) asparagine glycans are attached at residues asparagine 123 and asparagine 156. The active-site Charge relay system is the serine 206.

The protein belongs to the peptidase S1 family. Snake venom subfamily. In terms of assembly, monomer. In terms of tissue distribution, expressed by the venom gland.

Its subcellular location is the secreted. Snake venom serine protease that may act in the hemostasis system of the prey. The polypeptide is Snake venom serine protease salmobin (Gloydius halys (Chinese water mocassin)).